A 1073-amino-acid polypeptide reads, in one-letter code: DNA-directed RNA polymerase subunit beta (1073 aa).

Belongs to the RNA polymerase beta chain family. In terms of assembly, in plastids the minimal PEP RNA polymerase catalytic core is composed of four subunits: alpha, beta, beta', and beta''. When a (nuclear-encoded) sigma factor is associated with the core the holoenzyme is formed, which can initiate transcription.

The protein resides in the plastid. It is found in the chloroplast. The catalysed reaction is RNA(n) + a ribonucleoside 5'-triphosphate = RNA(n+1) + diphosphate. DNA-dependent RNA polymerase catalyzes the transcription of DNA into RNA using the four ribonucleoside triphosphates as substrates. This Aethionema grandiflorum (Persian stone-cress) protein is DNA-directed RNA polymerase subunit beta.